A 213-amino-acid polypeptide reads, in one-letter code: V-type ATP synthase subunit D (213 aa).

This sequence belongs to the V-ATPase D subunit family.

In terms of biological role, produces ATP from ADP in the presence of a proton gradient across the membrane. This chain is V-type ATP synthase subunit D, found in Clostridium botulinum (strain Alaska E43 / Type E3).